The primary structure comprises 318 residues: Phospho-N-acetylmuramoyl-pentapeptide-transferase (318 aa).

The next 10 membrane-spanning stretches (helical) occupy residues 5-25, 50-70, 71-91, 115-135, 139-159, 173-193, 198-218, 222-242, 248-268, and 298-318; these read LKPL…VLAF, PTMG…VLAP, PSPL…IGLV, VLLG…GSVI, VTGW…LLLV, GLAA…ALTL, LVTF…YNFH, VFMG…LAIM, VLPV…LQVV, and VLFF…LLTI.

Belongs to the glycosyltransferase 4 family. MraY subfamily. Mg(2+) is required as a cofactor.

The protein localises to the cell membrane. It carries out the reaction UDP-N-acetyl-alpha-D-muramoyl-L-alanyl-gamma-D-glutamyl-meso-2,6-diaminopimeloyl-D-alanyl-D-alanine + di-trans,octa-cis-undecaprenyl phosphate = di-trans,octa-cis-undecaprenyl diphospho-N-acetyl-alpha-D-muramoyl-L-alanyl-D-glutamyl-meso-2,6-diaminopimeloyl-D-alanyl-D-alanine + UMP. Its pathway is cell wall biogenesis; peptidoglycan biosynthesis. Functionally, catalyzes the initial step of the lipid cycle reactions in the biosynthesis of the cell wall peptidoglycan: transfers peptidoglycan precursor phospho-MurNAc-pentapeptide from UDP-MurNAc-pentapeptide onto the lipid carrier undecaprenyl phosphate, yielding undecaprenyl-pyrophosphoryl-MurNAc-pentapeptide, known as lipid I. The polypeptide is Phospho-N-acetylmuramoyl-pentapeptide-transferase (Moorella thermoacetica (strain ATCC 39073 / JCM 9320)).